A 275-amino-acid chain; its full sequence is NH(3)-dependent NAD(+) synthetase (275 aa).

47 to 54 (GISGGQDS) contributes to the ATP binding site. Asp-53 is a binding site for Mg(2+). Arg-141 is a deamido-NAD(+) binding site. Thr-161 serves as a coordination point for ATP. Glu-166 contacts Mg(2+). Deamido-NAD(+)-binding residues include Lys-174 and Asp-181. ATP is bound by residues Lys-190 and Thr-212. 261–262 (HK) is a binding site for deamido-NAD(+).

This sequence belongs to the NAD synthetase family. In terms of assembly, homodimer.

It carries out the reaction deamido-NAD(+) + NH4(+) + ATP = AMP + diphosphate + NAD(+) + H(+). It participates in cofactor biosynthesis; NAD(+) biosynthesis; NAD(+) from deamido-NAD(+) (ammonia route): step 1/1. Functionally, catalyzes the ATP-dependent amidation of deamido-NAD to form NAD. Uses ammonia as a nitrogen source. This chain is NH(3)-dependent NAD(+) synthetase, found in Lactiplantibacillus plantarum (strain ATCC BAA-793 / NCIMB 8826 / WCFS1) (Lactobacillus plantarum).